Here is a 320-residue protein sequence, read N- to C-terminus: Nuclease (320 aa).

Histidine 155 (proton acceptor) is an active-site residue. Asparagine 187 contacts Mg(2+). An N-linked (GlcNAc...) asparagine glycan is attached at asparagine 204. Cysteine 312 and cysteine 317 are joined by a disulfide.

The protein belongs to the DNA/RNA non-specific endonuclease family. Homodimer; as a result of non-covalent interactions and not through the disulfide linkages between the two monomers. Mg(2+) is required as a cofactor. The cofactor is Mn(2+). Post-translationally, glycosylated.

It is found in the secreted. In terms of biological role, this enzyme has both RNase and DNase activity. This Syncephalastrum racemosum (Filamentous fungus) protein is Nuclease.